The primary structure comprises 87 residues: Small ribosomal subunit protein uS15c (87 aa).

Residues 1-20 are disordered; sequence MNQNLSIRKRNKLKQDSGSP.

It belongs to the universal ribosomal protein uS15 family. Part of the 30S ribosomal subunit.

It is found in the plastid. It localises to the chloroplast. In Zygnema circumcarinatum (Green alga), this protein is Small ribosomal subunit protein uS15c (rps15).